Consider the following 1028-residue polypeptide: Pro-apoptotic serine protease NMA111 (1028 aa).

Positions 1–10 (MEMSSKRKHS) are enriched in basic residues. The disordered stretch occupies residues 1–39 (MEMSSKRKHSSGPISLRSTKHLRSDTAASPQPLTPDDQT). The serine protease stretch occupies residues 85-269 (VVSIHFCQTA…AATDYFLPLD (185 aa)). Active-site charge relay system residues include H123, D154, and S236. PDZ domains lie at 292-377 (QWII…LLVQ) and 878-959 (IFCG…VTFD). Residues 1003–1028 (SDNLNADAMDEGRDDGISDMEPDGEK) form a disordered region. Residues 1019 to 1028 (ISDMEPDGEK) are compositionally biased toward acidic residues.

This sequence belongs to the peptidase S1C family.

It is found in the nucleus. Nuclear serine protease which mediates apoptosis. This is Pro-apoptotic serine protease NMA111 (NMA111) from Ajellomyces capsulatus (strain NAm1 / WU24) (Darling's disease fungus).